Here is a 216-residue protein sequence, read N- to C-terminus: Uracil phosphoribosyltransferase (216 aa).

5-phospho-alpha-D-ribose 1-diphosphate is bound by residues Arg-85, Arg-110, and 135-143; that span reads DPMVATGYS. Uracil is bound by residues Ile-200 and 205–207; that span reads GDA. Asp-206 is a 5-phospho-alpha-D-ribose 1-diphosphate binding site.

This sequence belongs to the UPRTase family. Mg(2+) is required as a cofactor.

The enzyme catalyses UMP + diphosphate = 5-phospho-alpha-D-ribose 1-diphosphate + uracil. The protein operates within pyrimidine metabolism; UMP biosynthesis via salvage pathway; UMP from uracil: step 1/1. Allosterically activated by GTP. Functionally, catalyzes the conversion of uracil and 5-phospho-alpha-D-ribose 1-diphosphate (PRPP) to UMP and diphosphate. This Burkholderia multivorans (strain ATCC 17616 / 249) protein is Uracil phosphoribosyltransferase.